We begin with the raw amino-acid sequence, 504 residues long: Maturase K (504 aa).

Belongs to the intron maturase 2 family. MatK subfamily.

The protein resides in the plastid. Its subcellular location is the chloroplast. In terms of biological role, usually encoded in the trnK tRNA gene intron. Probably assists in splicing its own and other chloroplast group II introns. This is Maturase K from Cynophalla hastata (Broadleaf caper).